The chain runs to 1653 residues: Protein TOPAZ1 (1653 aa).

3 disordered regions span residues 1–94 (MRPP…TDLV), 284–303 (YSVE…KSGK), and 415–442 (ISST…SETE). A compositionally biased stretch (basic and acidic residues) spans 63–78 (GREETEGDKLAKENGK). Basic and acidic residues predominate over residues 423–442 (SDGHHMEKRSPRGDLRSETE).

Restricted to testis, where it localizes to germ cells.

Its subcellular location is the cytoplasm. It is found in the cytosol. Its function is as follows. Important for normal spermatogenesis and male fertility. Specifically required for progression to the post-meiotic stages of spermatocyte development. Seems to be necessary for normal expression levels of a number of testis-expressed gene transcripts, although its role in this process is unclear. The polypeptide is Protein TOPAZ1 (Mus musculus (Mouse)).